The sequence spans 323 residues: ATP synthase gamma chain (323 aa).

A disordered region spans residues 215–237 (PAGGPAKEQEQGDEGGHGAPSAA). Residues 221–230 (KEQEQGDEGG) show a composition bias toward basic and acidic residues.

This sequence belongs to the ATPase gamma chain family. As to quaternary structure, F-type ATPases have 2 components, CF(1) - the catalytic core - and CF(0) - the membrane proton channel. CF(1) has five subunits: alpha(3), beta(3), gamma(1), delta(1), epsilon(1). CF(0) has three main subunits: a, b and c.

The protein resides in the cell inner membrane. Produces ATP from ADP in the presence of a proton gradient across the membrane. The gamma chain is believed to be important in regulating ATPase activity and the flow of protons through the CF(0) complex. The protein is ATP synthase gamma chain of Sorangium cellulosum (strain So ce56) (Polyangium cellulosum (strain So ce56)).